Here is a 557-residue protein sequence, read N- to C-terminus: CDP-diacylglycerol--glycerol-3-phosphate 3-phosphatidyltransferase, mitochondrial (557 aa).

A mitochondrion-targeting transit peptide spans 1 to 25 (MAAAGGAALWRRLAAWLPRGPPGLA). 121–128 (ASLYLGTG) is a binding site for ATP. A PLD phosphodiesterase 1 domain is found at 212–238 (TIGLQHIKVYLFDDNVILSGANLSDLY). Active-site residues include His-217, Lys-219, and Asp-224. Residues 322–346 (TFHSSQQGSSMLPQHDSEASEGLKP) form a disordered region. The segment covering 323–333 (FHSSQQGSSML) has biased composition (polar residues). Residues 336–346 (HDSEASEGLKP) show a composition bias toward basic and acidic residues. A PLD phosphodiesterase 2 domain is found at 461-494 (AGWTFHAKGLWLYLAGSSLPCLTLIGSPNFGYRS).

It belongs to the CDP-alcohol phosphatidyltransferase class-II family.

The protein localises to the mitochondrion. The catalysed reaction is a CDP-1,2-diacyl-sn-glycerol + sn-glycerol 3-phosphate = a 1,2-diacyl-sn-glycero-3-phospho-(1'-sn-glycero-3'-phosphate) + CMP + H(+). It functions in the pathway phospholipid metabolism; phosphatidylglycerol biosynthesis; phosphatidylglycerol from CDP-diacylglycerol: step 1/2. Its activity is regulated as follows. Activated by calcium and magnesium and inhibited by other bivalent cations. Its function is as follows. Functions in the biosynthesis of the anionic phospholipids phosphatidylglycerol and cardiolipin. The polypeptide is CDP-diacylglycerol--glycerol-3-phosphate 3-phosphatidyltransferase, mitochondrial (PGS1) (Gallus gallus (Chicken)).